The chain runs to 902 residues: Probable dipeptidyl-aminopeptidase B (902 aa).

2 disordered regions span residues 1-23 and 53-72; these read MTRR…LSVD and DAEA…KLGS. The Cytoplasmic segment spans residues 1-78; the sequence is MTRRRSTSGT…KLGSGSRTRQ (78 aa). Residues 7–21 show a composition bias toward low complexity; that stretch reads TSGTSSRSSTDSGLS. Residues 79–99 form a helical; Signal-anchor for type II membrane protein membrane-spanning segment; the sequence is IFWALVILCLGGWVLALVLFL. At 100–902 the chain is on the vacuolar side; the sequence is THGRASSQTA…VKRSVPAFAH (803 aa). N-linked (GlcNAc...) asparagine glycans are attached at residues Asn-335 and Asn-626. Residue Ser-740 is the Charge relay system of the active site. N-linked (GlcNAc...) asparagine glycans are attached at residues Asn-794 and Asn-799. Active-site charge relay system residues include Asp-817 and His-850.

This sequence belongs to the peptidase S9B family.

It is found in the vacuole membrane. It catalyses the reaction Release of an N-terminal dipeptide, Xaa-Yaa-|-Zaa-, from a polypeptide, preferentially when Yaa is Pro, provided Zaa is neither Pro nor hydroxyproline.. Functionally, type IV dipeptidyl-peptidase which removes N-terminal dipeptides sequentially from polypeptides having unsubstituted N-termini provided that the penultimate residue is proline. The chain is Probable dipeptidyl-aminopeptidase B (dapB) from Aspergillus oryzae (strain ATCC 42149 / RIB 40) (Yellow koji mold).